A 267-amino-acid polypeptide reads, in one-letter code: 2-keto-3-deoxy-L-rhamnonate aldolase (267 aa).

The active-site Proton acceptor is His49. Gln151 contacts substrate. Glu153 contacts Mg(2+). Positions 178 and 179 each coordinate substrate. Asp179 is a Mg(2+) binding site.

It belongs to the HpcH/HpaI aldolase family. KDR aldolase subfamily. In terms of assembly, homohexamer. Mg(2+) is required as a cofactor.

It carries out the reaction 2-dehydro-3-deoxy-L-rhamnonate = (S)-lactaldehyde + pyruvate. Its function is as follows. Catalyzes the reversible retro-aldol cleavage of 2-keto-3-deoxy-L-rhamnonate (KDR) to pyruvate and lactaldehyde. The protein is 2-keto-3-deoxy-L-rhamnonate aldolase of Salmonella agona (strain SL483).